A 325-amino-acid polypeptide reads, in one-letter code: tRNA(Ile)-lysidine synthase (325 aa).

ATP is bound at residue 34 to 39 (SGGADS).

The protein belongs to the tRNA(Ile)-lysidine synthase family.

It localises to the cytoplasm. The enzyme catalyses cytidine(34) in tRNA(Ile2) + L-lysine + ATP = lysidine(34) in tRNA(Ile2) + AMP + diphosphate + H(+). Its function is as follows. Ligates lysine onto the cytidine present at position 34 of the AUA codon-specific tRNA(Ile) that contains the anticodon CAU, in an ATP-dependent manner. Cytidine is converted to lysidine, thus changing the amino acid specificity of the tRNA from methionine to isoleucine. This chain is tRNA(Ile)-lysidine synthase, found in Rhodococcus jostii (strain RHA1).